The primary structure comprises 110 residues: Large ribosomal subunit protein uL22 (110 aa).

Belongs to the universal ribosomal protein uL22 family. In terms of assembly, part of the 50S ribosomal subunit.

In terms of biological role, this protein binds specifically to 23S rRNA; its binding is stimulated by other ribosomal proteins, e.g. L4, L17, and L20. It is important during the early stages of 50S assembly. It makes multiple contacts with different domains of the 23S rRNA in the assembled 50S subunit and ribosome. The globular domain of the protein is located near the polypeptide exit tunnel on the outside of the subunit, while an extended beta-hairpin is found that lines the wall of the exit tunnel in the center of the 70S ribosome. This is Large ribosomal subunit protein uL22 from Photorhabdus laumondii subsp. laumondii (strain DSM 15139 / CIP 105565 / TT01) (Photorhabdus luminescens subsp. laumondii).